We begin with the raw amino-acid sequence, 482 residues long: NAD(+) hydrolase ThsA (482 aa).

The 279-residue stretch at 3 to 281 folds into the Deacetylase sirtuin-type domain; that stretch reads EHEQKIMIDR…EEITKRFRCK (279 aa). Asp112 and His150 together coordinate NAD(+). Residue His150 is the Proton acceptor of the active site. An SLOG (STALD) domain region spans residues 282–482; it reads NVFLSGSAHE…SKIHDVIKLI (201 aa). Positions 287, 288, 324, 355, 373, 390, 407, and 411 each coordinate 3'cADPR.

Belongs to the soluble Thoeris ThsA family. As to quaternary structure, homotetramer in solution.

It catalyses the reaction NAD(+) + H2O = ADP-D-ribose + nicotinamide + H(+). Its activity is regulated as follows. In vivo probably activated by a cyclic ADP-D-ribose generated by ThsB (might be 3'cADPR). Functionally, NAD(+) hydrolyzing component (NADase) of the Thoeris antiviral defense system, composed of ThsA and ThsB (maybe J591_1492). As purified, has NADase activity that is not activated by any tested cADPR isomers; binds 3'cADPR better than 2'cADPR. It was suggested the purified protein is already in a fully active state. Upon activation binds and hydrolyzes NAD(+), leading to cell death and inhibition of phage replication. In Acinetobacter baumannii (strain 532279), this protein is NAD(+) hydrolase ThsA.